The chain runs to 302 residues: Oxygen-dependent coproporphyrinogen-III oxidase (302 aa).

A substrate-binding site is contributed by serine 94. Histidine 98 and histidine 108 together coordinate a divalent metal cation. The Proton donor role is filled by histidine 108. Substrate is bound at residue 110-112 (NVR). A divalent metal cation-binding residues include histidine 147 and histidine 177. An important for dimerization region spans residues 242–277 (YVEFNLVYDRGTLFGLQTGGRTESILMSMPPLVRWQ). Residue 260-262 (GGR) coordinates substrate.

It belongs to the aerobic coproporphyrinogen-III oxidase family. In terms of assembly, homodimer. It depends on a divalent metal cation as a cofactor.

The protein resides in the cytoplasm. It carries out the reaction coproporphyrinogen III + O2 + 2 H(+) = protoporphyrinogen IX + 2 CO2 + 2 H2O. The protein operates within porphyrin-containing compound metabolism; protoporphyrin-IX biosynthesis; protoporphyrinogen-IX from coproporphyrinogen-III (O2 route): step 1/1. Involved in the heme biosynthesis. Catalyzes the aerobic oxidative decarboxylation of propionate groups of rings A and B of coproporphyrinogen-III to yield the vinyl groups in protoporphyrinogen-IX. The chain is Oxygen-dependent coproporphyrinogen-III oxidase from Shewanella sp. (strain MR-4).